The primary structure comprises 511 residues: Glucose-6-phosphate 1-dehydrogenase (511 aa).

Residues 29-36 (GASGDLAK), arginine 63, and lysine 164 each bind NADP(+). Residues lysine 164, 194-198 (HYLGK), glutamate 232, and aspartate 251 contribute to the D-glucose 6-phosphate site. The active-site Proton acceptor is histidine 256. Lysine 347 serves as a coordination point for NADP(+). A D-glucose 6-phosphate-binding site is contributed by lysine 350. Positions 356, 360, and 382 each coordinate NADP(+). Glutamine 384 is a binding site for D-glucose 6-phosphate. Residues 390-392 (YIK), 410-412 (DLT), and arginine 477 each bind NADP(+).

The protein belongs to the glucose-6-phosphate dehydrogenase family.

The enzyme catalyses D-glucose 6-phosphate + NADP(+) = 6-phospho-D-glucono-1,5-lactone + NADPH + H(+). It participates in carbohydrate degradation; pentose phosphate pathway; D-ribulose 5-phosphate from D-glucose 6-phosphate (oxidative stage): step 1/3. Catalyzes the rate-limiting step of the oxidative pentose-phosphate pathway, which represents a route for the dissimilation of carbohydrates besides glycolysis. The main function of this enzyme is to provide reducing power (NADPH) and pentose phosphates for fatty acid and nucleic acid synthesis. This chain is Glucose-6-phosphate 1-dehydrogenase (gsdA), found in Emericella nidulans (strain FGSC A4 / ATCC 38163 / CBS 112.46 / NRRL 194 / M139) (Aspergillus nidulans).